Reading from the N-terminus, the 1158-residue chain is Serine/threonine/tyrosine-interacting-like protein 2 (1158 aa).

Disordered regions lie at residues 1-21 (MATR…DEAN), 280-303 (EERE…GTGS), 315-337 (EEED…QASK), 360-392 (LLSD…VERI), 407-444 (GYRR…ESVS), 492-527 (SRRY…GSEA), 559-582 (KDLG…KNPS), 597-622 (QKKV…LAKK), 873-915 (KVKE…CSSL), and 940-1135 (SGLR…MDDE). The segment covering 8 to 19 (EEEQVVPSEEDE) has biased composition (acidic residues). The Tyrosine-protein phosphatase domain occupies 132–280 (NEVDEVWPNV…LRELNEKLME (149 aa)). Residues 322-337 (SHLSGSSLGKATQASK) are compositionally biased toward polar residues. A Phosphoserine modification is found at Ser-377. Residue Thr-433 is modified to Phosphothreonine. Over residues 435–444 (SESSAWESVS) the composition is skewed to low complexity. The span at 500-517 (KREEAADRSSEAGSRVRE) shows a compositional bias: basic and acidic residues. Ser-509 is modified (phosphoserine). Positions 600–619 (VGSENKEEVVELSKGEDSAL) are enriched in basic and acidic residues. A compositionally biased stretch (acidic residues) spans 877 to 890 (DEDDGVGDGDEDTD). Composition is skewed to polar residues over residues 897 to 914 (RYSS…TCSS) and 952 to 966 (SDWS…TRSS). Over residues 974-983 (KSSSYKFSKS) the composition is skewed to low complexity. Ser-985 carries the phosphoserine modification. Over residues 990–999 (TSSYHEANGN) the composition is skewed to polar residues. Low complexity predominate over residues 1000 to 1012 (SVRSTSRFSSSST). The residue at position 1036 (Ser-1036) is a Phosphoserine. Basic and acidic residues-rich tracts occupy residues 1044 to 1056 (RTPE…ESPE), 1064 to 1079 (RSRD…KSDF), and 1094 to 1111 (RSEE…EEGR). Residues 1126–1135 (REEEEEMDDE) show a composition bias toward acidic residues.

Belongs to the protein-tyrosine phosphatase family. Non-receptor class dual specificity subfamily.

It is found in the cytoplasm. It localises to the myofibril. Its subcellular location is the sarcomere. Its function is as follows. May be required for myofiber maturation. This chain is Serine/threonine/tyrosine-interacting-like protein 2, found in Homo sapiens (Human).